Consider the following 162-residue polypeptide: Precursor protein UG (162 aa).

Positions 1 to 19 are cleaved as a signal peptide; the sequence is MERILLCFIVATLVAISMA. Positions 20–23 are excised as a propeptide; that stretch reads NPRP. 2 disulfides stabilise this stretch: Cys-30-Cys-42 and Cys-33-Cys-49. Residues 56-59 constitute a propeptide that is removed on maturation; sequence VPKP. 2 disulfide bridges follow: Cys-66–Cys-78 and Cys-69–Cys-85. The propeptide occupies 92–95; sequence VPKP. 2 cysteine pairs are disulfide-bonded: Cys-102-Cys-114 and Cys-105-Cys-121. A propeptide spanning residues 128 to 131 is cleaved from the precursor; sequence VPKP. Disulfide bonds link Cys-138–Cys-150 and Cys-141–Cys-157.

It belongs to the sea anemone BBH family.

The protein resides in the secreted. It localises to the nematocyst. In terms of biological role, affects the ASIC3 channel (ACCN3) and produces analgesic effects. It produces a reversible inhibition effect on both the transient and the sustained current of human ASIC3 channels expressed in X.laevis oocytes. It completely blocks the transient component (IC(50)=10 uM) and partially (48%) inhibits the amplitude of the sustained component (IC(50)=1.44 uM). Using in vivo tests in mice, it reverses inflammatory and acid-induced pain. Does not affect the ASIC3 channel. Does not cause lethality or paralysis of noble crayfish (A.astacus) at a dose of 1 mg/kg. This Urticina grebelnyi (Painted anemone) protein is Precursor protein UG.